The sequence spans 292 residues: Protein rogdi homolog (292 aa).

Positions 1-12 (MEVQSLTITTNY) are enriched in polar residues. The tract at residues 1-25 (MEVQSLTITTNYPPKPASPNPQDIR) is disordered.

The protein belongs to the rogdi family.

The protein resides in the nucleus envelope. This is Protein rogdi homolog from Caenorhabditis elegans.